The sequence spans 572 residues: Proline--tRNA ligase (572 aa).

Belongs to the class-II aminoacyl-tRNA synthetase family. ProS type 1 subfamily. In terms of assembly, homodimer.

It localises to the cytoplasm. It carries out the reaction tRNA(Pro) + L-proline + ATP = L-prolyl-tRNA(Pro) + AMP + diphosphate. Its function is as follows. Catalyzes the attachment of proline to tRNA(Pro) in a two-step reaction: proline is first activated by ATP to form Pro-AMP and then transferred to the acceptor end of tRNA(Pro). As ProRS can inadvertently accommodate and process non-cognate amino acids such as alanine and cysteine, to avoid such errors it has two additional distinct editing activities against alanine. One activity is designated as 'pretransfer' editing and involves the tRNA(Pro)-independent hydrolysis of activated Ala-AMP. The other activity is designated 'posttransfer' editing and involves deacylation of mischarged Ala-tRNA(Pro). The misacylated Cys-tRNA(Pro) is not edited by ProRS. In Yersinia pseudotuberculosis serotype IB (strain PB1/+), this protein is Proline--tRNA ligase.